The following is a 218-amino-acid chain: Glutathione S-transferase A (218 aa).

The residue at position 1 (Ser-1) is an N-acetylserine. Positions 2-82 constitute a GST N-terminal domain; it reads GKPVLHYFNV…YIATKYNLYG (81 aa). An N6-succinyllysine modification is found at Lys-3. Glutathione-binding positions include Tyr-8, Lys-44, 53-54, and 66-67; these read QV and QS. Residues 84 to 206 form the GST C-terminal domain; it reads DTKERLLIDM…LQPGSQRKPF (123 aa).

It belongs to the GST superfamily. Alpha family. In terms of assembly, homodimer or heterodimer of GSTA1 and GSTA2.

The protein localises to the cytoplasm. The catalysed reaction is RX + glutathione = an S-substituted glutathione + a halide anion + H(+). The enzyme catalyses prostaglandin A2 + glutathione = prostaglandin A2-S-(R)-glutathione. It catalyses the reaction prostaglandin J2 + glutathione = prostaglandin J2-S-(R)-glutathione. It carries out the reaction (13S)-hydroperoxy-(9Z,11E)-octadecadienoate + 2 glutathione = (13S)-hydroxy-(9Z,11E)-octadecadienoate + glutathione disulfide + H2O. The catalysed reaction is androst-5-ene-3,17-dione = androst-4-ene-3,17-dione. In terms of biological role, glutathione S-transferase that catalyzes the nucleophilic attack of the sulfur atom of glutathione on the electrophilic groups of a wide range of exogenous and endogenous compounds. Involved in the formation of glutathione conjugates of both prostaglandin A2 (PGA2) and prostaglandin J2 (PGJ2). It also catalyzes the isomerization of D5-androstene-3,17-dione (AD) into D4-androstene-3,17-dione and may therefore play an important role in hormone biosynthesis. Through its glutathione-dependent peroxidase activity toward the fatty acid hydroperoxide (13S)-hydroperoxy-(9Z,11E)-octadecadienoate/13-HPODE it is also involved in the metabolism of oxidized linoleic acid. The sequence is that of Glutathione S-transferase A from Cavia porcellus (Guinea pig).